The following is a 490-amino-acid chain: Cysteine--tRNA ligase (490 aa).

Cysteine 43 serves as a coordination point for Zn(2+). The short motif at methionine 45–histidine 55 is the 'HIGH' region element. The segment at valine 177–lysine 204 is disordered. Over residues serine 186–lysine 204 the composition is skewed to basic and acidic residues. Zn(2+) is bound by residues cysteine 228, histidine 253, and glutamate 257. The 'KMSKS' region signature appears at lysine 284–serine 288. Residue lysine 287 coordinates ATP.

Belongs to the class-I aminoacyl-tRNA synthetase family. In terms of assembly, monomer. Requires Zn(2+) as cofactor.

Its subcellular location is the cytoplasm. It catalyses the reaction tRNA(Cys) + L-cysteine + ATP = L-cysteinyl-tRNA(Cys) + AMP + diphosphate. The polypeptide is Cysteine--tRNA ligase (Cutibacterium acnes (strain DSM 16379 / KPA171202) (Propionibacterium acnes)).